A 525-amino-acid chain; its full sequence is uncharacterized protein (525 aa).

Composition is skewed to polar residues over residues 139–149 (LNSTPDKTQAG) and 336–349 (SGKT…HTTS). 2 disordered regions span residues 139 to 158 (LNST…HQAP) and 330 to 356 (PAPA…PYAT).

This is an uncharacterized protein from Treponema pallidum (strain Nichols).